The primary structure comprises 386 residues: Enamidase (386 aa).

Zn(2+) contacts are provided by H67, H69, and E164. Fe cation contacts are provided by E164, H193, and H220. Zn(2+) is bound at residue D276.

Homotetramer. Dimer of dimers. The cofactor is Fe cation. It depends on Zn(2+) as a cofactor.

It catalyses the reaction 1,4,5,6-tetrahydro-6-oxonicotinate + 2 H2O = 2-formylglutarate + NH4(+). Its pathway is cofactor degradation; nicotinate degradation; propanoate and pyruvate from 6-hydroxynicotinate: step 2/8. Decyclization of 6-oxo-1,4,5,6-tetrahydronicotinate to form 2-(enamine)glutarate, followed by hydrolysis to form (S)-2-formylglutarate. This is Enamidase from Eubacterium barkeri (Clostridium barkeri).